The primary structure comprises 488 residues: G-patch domain and KOW motifs-containing protein (488 aa).

The span at 1 to 11 (MAGRESPPPSA) shows a compositional bias: pro residues. Residues 1-20 (MAGRESPPPSAPSMAPISFG) are disordered. N-acetylalanine is present on Ala2. Ser25 carries the post-translational modification Phosphoserine; by PKA. The segment at 72-97 (IQNGSRRQPLSKNPKPSSETSTVLMS) is disordered. The segment covering 73-95 (QNGSRRQPLSKNPKPSSETSTVL) has biased composition (polar residues). Residue Ser115 is modified to Phosphoserine. The region spanning 164 to 210 (VEAYGLAMLRGMGWKPGKGIGNTFSQVVKPRVNSIRPKGLGLGANRM) is the G-patch domain. Disordered stretches follow at residues 216–241 (ASVGSHHPPRPDGDRENDKEGQPQGL) and 295–367 (QEFD…PRNK). The span at 224 to 236 (PRPDGDRENDKEG) shows a compositional bias: basic and acidic residues. The KOW 1 domain maps to 231-258 (ENDKEGQPQGLMHGRAVVVLSGPYRGLY). A compositionally biased stretch (polar residues) spans 307-331 (VSQTSTEQQNRATGTASSLKAAQNQ). Composition is skewed to basic and acidic residues over residues 332 to 341 (EDSKRRQKGS) and 349 to 363 (PDRQDGPVPKTEKAA). One can recognise a KOW 2 domain in the interval 401–428 (PDTCVCRTDEGRVLEDVREDMLETLIPK). Position 485 is a phosphoserine (Ser485).

It belongs to the MOS2 family. Component of the minor spliceosome, which splices U12-type introns. Interacts with PRKX, PRKACB and DHX16. Phosphorylation regulates its ability to bind RNA.

It localises to the nucleus. RNA-binding protein involved in pre-mRNA splicing. As a component of the minor spliceosome, involved in the splicing of U12-type introns in pre-mRNAs. This chain is G-patch domain and KOW motifs-containing protein (Gpkow), found in Mus musculus (Mouse).